We begin with the raw amino-acid sequence, 293 residues long: Elongation factor Ts (293 aa).

Residues T81–V84 form an involved in Mg(2+) ion dislocation from EF-Tu region.

It belongs to the EF-Ts family.

The protein resides in the cytoplasm. Functionally, associates with the EF-Tu.GDP complex and induces the exchange of GDP to GTP. It remains bound to the aminoacyl-tRNA.EF-Tu.GTP complex up to the GTP hydrolysis stage on the ribosome. The polypeptide is Elongation factor Ts (Teredinibacter turnerae (strain ATCC 39867 / T7901)).